A 1614-amino-acid chain; its full sequence is Protein scribble homolog (1614 aa).

Residues 1-809 are sufficient for targeting to adherens junction and to inhibit cell proliferation; the sequence is MLKCIPLWRC…MRLWRERMVE (809 aa). LRR repeat units follow at residues 11-34, 35-58, 59-81, 83-105, 107-127, 128-150, 151-173, 174-196, 197-219, 221-242, 243-265, 267-288, 289-311, 312-334, 336-357, 359-380, and 382-405; these read NRHVESVDKRHCSLQAVPEEIYRY, SRSLEELLLDANQLRELPKPFFRL, LNLRKLGLSDNEIQRLPPEVANF, QLVELDVSRNDIPEIPESIKFCK, LEIADFSGNPLSRLPEGFTQL, RSLAHLALNDVSLQALPGDVGNL, ANLVTLELRENLLKSLPSSLSFL, VKLEQLDLGGNELEVLPDTLGAL, PNLRELWLDRNQLSALPPELGNL, RLVCLDVSENRLEELPAELGGL, LLLTDLLLSQNLLQRLPDGIGQL, QLSILKVDQNRLCEVTEAIGDC, ENLSELILTENLLTALPRSLGKL, TKLTNLNADRNRLEVLPPEIGGC, ALSVLSLRDNRLATLPAELAHT, ELHVLDVAGNRLQSLPFALTHL, and LKALWLAENQAQPMLRFQTEDDAQ. At serine 37 the chain carries Phosphoserine. Residue threonine 378 is modified to Phosphothreonine. Disordered stretches follow at residues 417–441, 462–608, and 636–692; these read PQQPPPSLEESGLQSSPSESWSDAP, GAAA…RLIR, and AQPD…VVSA. Over residues 428-437 the composition is skewed to polar residues; the sequence is GLQSSPSESW. A Phosphothreonine modification is found at threonine 475. Basic and acidic residues predominate over residues 479–494; it reads SELKVMKRGVEERRGE. Residues 516–533 show a composition bias toward polar residues; it reads TESGLSEDSQPSTGTASQ. Residues 548–557 show a composition bias toward low complexity; that stretch reads QQEAAPNAQE. Residues 662-686 show a composition bias toward acidic residues; sequence EEEDEEDEEEDEEEEEVAVAEEDKE. Residues 664 to 691 adopt a coiled-coil conformation; the sequence is EDEEDEEEDEEEEEVAVAEEDKEEAVVS. Phosphoserine occurs at positions 699 and 755. The interaction with ARHGEF7 stretch occupies residues 708–1219; that stretch reads IEPARIEEEE…SLESVSSIDR (512 aa). Residues 719-806 form the PDZ 1 domain; sequence TLTIVRQTGG…TVQMRLWRER (88 aa). A required for interaction with VIM region spans residues 719-1184; that stretch reads TLTIVRQTGG…TVLVCDGFDT (466 aa). Threonine 817 is modified (phosphothreonine). Residues serine 826, serine 866, and serine 930 each carry the phosphoserine modification. The 89-residue stretch at 853 to 941 folds into the PDZ 2 domain; the sequence is VACLVRSEKG…TIALLLEREA (89 aa). The disordered stretch occupies residues 940–971; that stretch reads EAGGPLPPSPLPHSPPPPVTAPSTVVTASPGE. Positions 944–959 are enriched in pro residues; sequence PLPPSPLPHSPPPPVT. Low complexity predominate over residues 960 to 969; that stretch reads APSTVVTASP. 2 consecutive PDZ domains span residues 994-1083 and 1090-1178; these read EICL…RRDP and ELCI…TVLV. Phosphoserine is present on residues serine 1130, serine 1210, serine 1213, serine 1216, serine 1222, serine 1260, serine 1268, and serine 1271. A disordered region spans residues 1214 to 1448; the sequence is VSSIDRELSP…LPDRALSPAE (235 aa). Residues 1217–1232 are compositionally biased toward basic and acidic residues; the sequence is IDRELSPEGCGKEKEP. Threonine 1304 carries the phosphothreonine modification. Residue serine 1310 is modified to Phosphoserine. The span at 1315 to 1327 shows a compositional bias: basic and acidic residues; the sequence is SFRERQKYFELEV. Position 1340 is a phosphoserine (serine 1340). Residues 1341–1368 adopt a coiled-coil conformation; it reads LVGADDLRKMQEEEARKLQQKRAQLMRE. The span at 1345–1357 shows a compositional bias: basic and acidic residues; that stretch reads DDLRKMQEEEARK. The segment covering 1378 to 1390 has biased composition (acidic residues); it reads LDGEAPDDEEPEE. Positions 1396–1408 are enriched in low complexity; it reads GPAAGLSPSSPQP. A phosphoserine mark is found at serine 1402 and serine 1405. Basic and acidic residues predominate over residues 1418–1429; sequence AKAERRHQERLR. Residues serine 1432, serine 1445, and serine 1467 each carry the phosphoserine modification. Residues 1476 to 1524 are disordered; sequence QMVLSKSQEGRSRRGPLERLAEAPSPAPTPSPTPVEDLGLQTSTSPGRL. Basic and acidic residues predominate over residues 1483-1496; sequence QEGRSRRGPLERLA. Serine 1500 carries the post-translational modification Phosphoserine. Threonine 1504 is modified (phosphothreonine). Residues serine 1506, serine 1520, and serine 1550 each carry the phosphoserine modification. A disordered region spans residues 1581 to 1614; that stretch reads GRPSPGTVGPEEVTLCSSRRPVRPGRRGLGPVPS.

This sequence belongs to the LAP (LRR and PDZ) protein family. Interacts with UBE3A. Interacts with PAK1 and PAK2. Interacts (via PDZ domains) with VANGL2. Interacts (via PDZ domains) with LPP and TRIP6; the interaction is direct. Interacts (via PDZ domains) with TJP2. Interacts (via PDZ domains) with APC; may mediate APC targeting to adherens junctions of epithelial cells. Interacts (via PDZ domains) with TSHR; regulates TSHR trafficking and function. Interacts with ARHGEF7 and GIT1; interacts directly with ARHGEF7. Interacts with CTNNB1. Interacts with MAPK12. Interacts (via PDZ domains 1 and 3) with MCC. Interacts with DLG5. Interacts with STK4/MST1 and LATS1 in the presence of DLG5. Interacts (via PDZ domain 3) with CRTAM (via PDZ-binding motif); the interaction promotes CRTAM and SCRIB polarization in a subset of CD4+ T-cells. Interacts with YES1, when YES1 is in a closed conformation; the interaction facilitates YES1 autophosphorylation. Interacts (via PDZ domains) with VIM; the interaction protects SCRIB from proteasomal degradation and facilitates SCRIB localization to intermediate filaments, the interaction is reduced by cell contact inhibition. In terms of processing, ubiquitinated; targeted for UBE3A-dependent multiubiquitination and degraded. Post-translationally, palmitoylated. Could be depalmitoylated by LYPLA1 and/or LYPLA2. Palmitoylation of SCRIB by ZDHHC7 is required for its localization to cell-cell junctions, function in the establishement of epithelial cell polarity and the regulation of downstream signaling pathways important for epithelial cell differentiation.

It is found in the cell membrane. The protein localises to the cell junction. It localises to the adherens junction. Its subcellular location is the cell projection. The protein resides in the lamellipodium. It is found in the cytoplasm. The protein localises to the postsynapse. It localises to the presynapse. Scaffold protein involved in different aspects of polarized cell differentiation regulating epithelial and neuronal morphogenesis and T-cell polarization. Via its interaction with CRTAM, required for the late phase polarization of a subset of CD4+ T-cells, which in turn regulates TCR-mediated proliferation and IFNG and IL22 production. Plays a role in cell directional movement, cell orientation, cell sheet organization and Golgi complex polarization at the cell migration front. Promotes epithelial cell layer barrier function via maintaining cell-cell adhesion. Most probably functions in the establishment of apico-basal cell polarity. May function in cell proliferation regulating progression from G1 to S phase and as a positive regulator of apoptosis for instance during acinar morphogenesis of the mammary epithelium. May regulate cell invasion via MAPK-mediated cell migration and adhesion. May play a role in exocytosis and in the targeting of synaptic vesicles to synapses. Functions as an activator of Rac GTPase activity. The polypeptide is Protein scribble homolog (Canis lupus familiaris (Dog)).